Here is a 190-residue protein sequence, read N- to C-terminus: dCTP deaminase (190 aa).

113 to 118 (KSTYAR) contacts dCTP. Glu139 functions as the Proton donor/acceptor in the catalytic mechanism. The dCTP site is built by Gln158, Tyr172, Lys181, and Gln182.

It belongs to the dCTP deaminase family. As to quaternary structure, homotrimer.

The catalysed reaction is dCTP + H2O + H(+) = dUTP + NH4(+). Its pathway is pyrimidine metabolism; dUMP biosynthesis; dUMP from dCTP (dUTP route): step 1/2. Catalyzes the deamination of dCTP to dUTP. This Chlamydia felis (strain Fe/C-56) (Chlamydophila felis) protein is dCTP deaminase.